The primary structure comprises 67 residues: Potassium channel toxin alpha-KTx (67 aa).

Positions 1 to 25 (MKNIAMKTTVVLTILLLSVLTAINA) are cleaved as a signal peptide. A propeptide spanning residues 26–31 (DTMKKR) is cleaved from the precursor. Cystine bridges form between Cys-35–Cys-54, Cys-40–Cys-59, Cys-44–Cys-61, and Cys-49–Cys-64.

Belongs to the short scorpion toxin superfamily. Potassium channel inhibitor family. As to expression, expressed by the venom gland.

Its subcellular location is the secreted. Its function is as follows. Blocks Kv1.1/KCNA1, Kv1.2/KCNA2 and Kv1.3/KCNA3 voltage-gated potassium channels. This is Potassium channel toxin alpha-KTx from Hoffmannihadrurus gertschi (Scorpion).